A 203-amino-acid polypeptide reads, in one-letter code: Anti-sigma-W factor RsiW (203 aa).

The Cytoplasmic segment spans residues 1–86; that stretch reads MECPKEIVLL…TARLRRFLHR (86 aa). Zn(2+) contacts are provided by H30, C34, and C37. Residues 87–103 form a helical membrane-spanning segment; the sequence is HPLLTAASLFLALTLGS. At 104 to 203 the chain is on the extracellular side; that stretch reads LASSWGERGA…RFNRALQSIE (100 aa).

It belongs to the zinc-associated anti-sigma factor (ZAS) superfamily. Anti-sigma-W factor family. The cofactor is Zn(2+). Post-translationally, is processed by three successive proteolytic events. First, the extracellular region of RsiW is cleaved by PrsW (Site-1 cleavage) in response to cell envelope stresses. Next, it undergoes cleavage at an intramembrane site (Site-2 cleavage) mediated by RasP. This cleavage uncovers a cryptic proteolytic tag with conserved alanine residues in the transmembrane segment, that is recognized mainly by the ClpXP protease, which completely degrades the protein in the cytoplasm and leads to the induction of the sigma-W-controlled genes.

The protein localises to the membrane. In terms of biological role, is the anti-sigma factor for SigW. The presence of RsiW leads to the inactivation of SigW, and its proteolytic destruction to sigma-W activation. In Geobacillus kaustophilus (strain HTA426), this protein is Anti-sigma-W factor RsiW (rsiW).